The sequence spans 497 residues: L-carnitine dehydrogenase/betainyl-CoA thioesterase (497 aa).

The tract at residues Met1 to Pro335 is L-carnitine dehydrogenase. Gly11 to Gly16 contributes to the NAD(+) binding site. The segment at Ala330 to Pro335 is important for dehydrogenase activity. Residues Glu336–Ala497 form a betainyl-CoA thioesterase region.

It in the N-terminal section; belongs to the 3-hydroxyacyl-CoA dehydrogenase family. L-carnitine dehydrogenase subfamily. In the C-terminal section; belongs to the betainyl-CoA thioesterase family. As to quaternary structure, homodimer.

The protein resides in the cytoplasm. It catalyses the reaction carnitine + NAD(+) = 3-dehydrocarnitine + NADH + H(+). It carries out the reaction N,N,N-trimethylglycyl-CoA + H2O = glycine betaine + CoA + H(+). Its pathway is amine and polyamine metabolism; carnitine metabolism. Catalyzes the NAD(+)-dependent oxidation of L-carnitine to 3-dehydrocarnitine. Probably also catalyzes the cleavage of betainyl-CoA (N,N,N-trimethylglycyl-CoA) into glycine betaine and coenzyme A. Despite a high similarity to 3-hydroxyacyl-CoA dehydrogenases, cannot dehydrogenate 3-hydroxybutylate and 3-hydroxybutyl-CoA. Is probably involved in a L-carnitine degradation pathway that allows Rhizobium sp. YS-240 to grow on L-carnitine as the sole source of carbon and nitrogen. The sequence is that of L-carnitine dehydrogenase/betainyl-CoA thioesterase from Rhizobium sp.